The sequence spans 187 residues: NAC domain-containing protein 104 (187 aa).

Positions 3–155 (LPPGFRFFPT…KWVICRVYEQ (153 aa)) constitute an NAC domain. The DNA-binding element occupies 94 to 161 (VGIKKYLTFY…VYEQNCSEEE (68 aa)). The tract at residues 118–142 (LPDSSSSSSRSSKRSSRASSSSHKP) is disordered.

Expressed in root xylem vessels. Expressed in stems, vascular tissue of cauline leaves and tracheary elements of sepals.

It localises to the nucleus. In terms of biological role, probable transcription factor that influences tracheary elements and xylem development by negatively regulating secondary cell wall fiber synthesis and programmed cell death. The chain is NAC domain-containing protein 104 from Arabidopsis thaliana (Mouse-ear cress).